A 269-amino-acid polypeptide reads, in one-letter code: MGTIADIAATEQNAERFWIVVHRDGAPSLRLTVDQDVLLQFRLKKGMEISDDLLQHIVYADEVKKAYQQALYFLAHRMRSEHEVAAHLRKKGAPDSVIDEVLKKLRAERYVDDEAFAAAYVRTQKKTAAKGPLLVRAELERLGVPDRLIEQSLAEYTLDEQMAIARSLYEKAKKQRRDESARAFLERVRQQLMRKGFPHEVIAAVLADGGTHTEQEEREALSVQAEKAHRRYAHHPRPLYEQKMRQALYRKGFALDLINEWLRMHGNDE.

Belongs to the RecX family.

The protein localises to the cytoplasm. In terms of biological role, modulates RecA activity. The chain is Regulatory protein RecX from Geobacillus kaustophilus (strain HTA426).